Consider the following 258-residue polypeptide: Ureidoacrylate amidohydrolase RutB (258 aa).

The disordered stretch occupies residues 1 to 23 (MDRPTTYPMDQPAGFRDAQGRHG). The active-site Proton acceptor is D47. K156 is an active-site residue. C189 (nucleophile) is an active-site residue.

It belongs to the isochorismatase family. RutB subfamily.

The enzyme catalyses (Z)-3-ureidoacrylate + H2O + H(+) = (Z)-3-aminoacrylate + NH4(+) + CO2. It catalyses the reaction (Z)-3-ureidoacrylate + H2O = (Z)-3-aminoacrylate + carbamate + H(+). It carries out the reaction (Z)-2-methylureidoacrylate + H2O + H(+) = (Z)-2-methylaminoacrylate + NH4(+) + CO2. Hydrolyzes ureidoacrylate to form aminoacrylate and carbamate. The carbamate hydrolyzes spontaneously, thereby releasing one of the nitrogen atoms of the pyrimidine ring as ammonia and one of its carbon atoms as CO2. This is Ureidoacrylate amidohydrolase RutB from Methylobacterium radiotolerans (strain ATCC 27329 / DSM 1819 / JCM 2831 / NBRC 15690 / NCIMB 10815 / 0-1).